The primary structure comprises 220 residues: Meiotic nuclear division protein 1 homolog (220 aa).

The stretch at 76–147 (SKALHARKRR…KVEIEKYQEC (72 aa)) forms a coiled coil.

Belongs to the MND1 family.

It is found in the nucleus. Its function is as follows. Required for proper homologous chromosome pairing and efficient cross-over and intragenic recombination during meiosis. Stimulates both DMC1- and RAD51-mediated homologous strand assimilation, which is required for the resolution of meiotic double-strand breaks. The polypeptide is Meiotic nuclear division protein 1 homolog (Danio rerio (Zebrafish)).